Reading from the N-terminus, the 245-residue chain is Nucleoprotein (245 aa).

RNA-binding residues include Y30, K67, R106, R186, and S196.

It belongs to the phlebovirus nucleocapsid protein family. In terms of assembly, homodimer. Homohexamer; ring-shaped, necessary to form the nucleocapsid. Homopentamers; opened pentamers in solution. Binds to viral genomic RNA. Interacts with glycoprotein Gn; this interaction allows packaging of nucleocapsids into virions.

Its subcellular location is the virion. It is found in the host cytoplasm. It localises to the host nucleus. The protein resides in the host endoplasmic reticulum-Golgi intermediate compartment. The protein localises to the host Golgi apparatus. Its function is as follows. Encapsidates the genomic RNA, protecting it from nucleases. Displays high affinity for single-stranded nucleic acid. The encapsidated genomic RNA is termed the nucleocapsid (NC) or ribonucleoprotein. The ribonucleoprotein has a non-helical structure. Serves as template for viral transcription and replication. After replication, the nucleocapsid is recruited to the host Golgi apparatus by glycoprotein Gn for packaging into virus particles. This chain is Nucleoprotein (NP), found in Dabie bandavirus (Severe fever with thrombocytopenia virus).